The sequence spans 500 residues: Lysine--tRNA ligase (500 aa).

The Mg(2+) site is built by E410 and E417.

Belongs to the class-II aminoacyl-tRNA synthetase family. As to quaternary structure, homodimer. The cofactor is Mg(2+).

The protein resides in the cytoplasm. It carries out the reaction tRNA(Lys) + L-lysine + ATP = L-lysyl-tRNA(Lys) + AMP + diphosphate. The polypeptide is Lysine--tRNA ligase (Shewanella sediminis (strain HAW-EB3)).